A 97-amino-acid chain; its full sequence is MRPLLCALTGLALLRAAGSLAAAEPFSPPRGDSAQSTACDRHMAVQRRLDVMEEMVEKTVDHLGTEVKGLLGLLEELAWNLPPGPFSPAPDLLGDGF.

The first 22 residues, 1–22 (MRPLLCALTGLALLRAAGSLAA), serve as a signal peptide directing secretion.

The protein belongs to the PLAC9 family.

It is found in the secreted. This chain is Placenta-specific protein 9 (PLAC9), found in Homo sapiens (Human).